We begin with the raw amino-acid sequence, 361 residues long: Free fatty acid receptor 4 (361 aa).

The disordered stretch occupies residues 1 to 21 (MSPECAQTTGPGPSRTPDQVN). At 1-45 (MSPECAQTTGPGPSRTPDQVNRTHFPFFSDVKGDHRLVLSVLETT) the chain is on the extracellular side. The N-linked (GlcNAc...) asparagine glycan is linked to asparagine 21. Residues 46–66 (VLGLIFVVSLLGNVCALVLVV) form a helical membrane-spanning segment. At 67-77 (RRRRRGATVSL) the chain is on the cytoplasmic side. Residues 78-98 (VLNLFCADLLFTSAIPLVLVV) form a helical membrane-spanning segment. Residues 99–103 (RWTEA) lie on the Extracellular side of the membrane. Residues 104-124 (WLLGPVVCHLLFYVMTMSGSV) traverse the membrane as a helical segment. The cysteines at positions 111 and 194 are disulfide-linked. Topologically, residues 125-156 (TILTLAAVSLERMVCIVRLRRGLSGPGRRTQA) are cytoplasmic. The helical transmembrane segment at 157-177 (ALLAFIWGYSALAALPLCILF) threads the bilayer. Residues 178–204 (RVVPQRLPGGDQEIPICTLDWPNRIGE) are Extracellular-facing. Residues 205-225 (ISWDVFFVTLNFLVPGLVIVI) traverse the membrane as a helical segment. The Cytoplasmic portion of the chain corresponds to 226–268 (SYSKILQITKASRKRLTLSLAYSESHQIRVSQQDYRLFRTLFL). Residues 269–289 (LMVSFFIMWSPIIITILLILI) traverse the membrane as a helical segment. Residues 290 to 295 (QNFRQD) lie on the Extracellular side of the membrane. Residues 296–316 (LVIWPSLFFWVVAFTFANSAL) traverse the membrane as a helical segment. Topologically, residues 317–361 (NPILYNMSLFRSEWRKIFCCFFFPEKGAIFTETSIRRNDLSVIST) are cytoplasmic. 2 positions are modified to phosphothreonine: threonine 347 and threonine 349. Serine 350, serine 357, and serine 360 each carry phosphoserine.

The protein belongs to the G-protein coupled receptor 1 family. As to quaternary structure, interacts (via C-terminus) with ARRB2 following LCFAs stimulation. Phosphorylated at two clusters of Ser and Thr residues located in the intracellular C-terminus. Prerequisite for FFAR4 internalization via an ARRB2-dependent pathway.

The protein localises to the cell membrane. The protein resides in the endosome membrane. Its subcellular location is the lysosome membrane. It is found in the cell projection. It localises to the cilium membrane. In terms of biological role, G-protein-coupled receptor for long-chain fatty acids (LCFAs) with a major role in adipogenesis, energy metabolism and inflammation. Signals via G-protein and beta-arrestin pathways. LCFAs sensing initiates activation of phosphoinositidase C-linked G proteins GNAQ and GNA11 (G(q)/G(11)), inducing a variety of cellular responses via second messenger pathways such as intracellular calcium mobilization, modulation of cyclic adenosine monophosphate (cAMP) production, and mitogen-activated protein kinases (MAPKs). After LCFAs binding, associates with beta-arrestin ARRB2 that acts as an adapter protein coupling the receptor to specific downstream signaling pathways, as well as mediating receptor endocytosis. In response to dietary fats, plays an important role in the regulation of adipocyte proliferation and differentiation. Acts as a receptor for omega-3 polyunsaturated fatty acids (PUFAs) at primary cilium of perivascular preadipocytes, initiating an adipogenic program via cAMP and CTCF-dependent chromatin remodeling that ultimately results in transcriptional activation of adipogenic genes and cell cycle entry. Induces differentiation of brown and beige adipocytes probably via autocrine and endocrine functions of FGF21 hormone. Contributes to the thermogenic activation of brown adipose tissue and the browning of white adipose tissue. Activates brown adipocytes by initiating intracellular calcium signaling leading to mitochondrial depolarization and fission, and overall increased mitochondrial respiration. Consequently stimulates fatty acid uptake and oxidation in mitochondria together with UCP1-mediated thermogenic respiration, eventually reducing fat mass. Regulates bi-potential differentiation of bone marrow mesenchymal stem cells toward osteoblasts or adipocytes likely by up-regulating distinct integrins. In response to dietary fats regulates hormone secretion and appetite. Stimulates GIP and GLP1 secretion from enteroendocrine cells as well as GCG secretion in pancreatic alpha cells, thereby playing a role in the regulation of blood glucose levels. Negatively regulates glucose-induced SST secretion in pancreatic delta cells. Mediates LCFAs inhibition of GHRL secretion, an appetite-controlling hormone. In taste buds, contributes to sensing of dietary fatty acids by the gustatory system. During the inflammatory response, promotes anti-inflammatory M2 macrophage differentiation in adipose tissue. Mediates the anti-inflammatory effects of omega-3 PUFAs via inhibition of NLRP3 inflammasome activation. In this pathway, interacts with adapter protein ARRB2 and inhibits the priming step triggered by Toll-like receptors (TLRs) at the level of TAK1 and TAB1. Further inhibits the activation step when ARRB2 directly associates with NLRP3, leading to inhibition of pro-inflammatory cytokine release. Mediates LCFAs anti-apoptotic effects. This is Free fatty acid receptor 4 (Ffar4) from Rattus norvegicus (Rat).